We begin with the raw amino-acid sequence, 359 residues long: MIRHTINLKERSYPICIATDFQELGKTVLSFRQGNKALLITDENVDNYYSDECMKVLQVSGIEVNKHVLKPGESNKTLEAVYGIYNKMVECKLDRSSIVLALGGGVVGDIAGFAAATYMRGINFVQIPTTLLAQADSSVGGKTGVDFNGHKNIVGAFYQPKAVFINVNTIKTLPKREISAGLAEVIKHGLIMDEEYCDYINYNADKIFKFDENVLQYLAKKNCSIKGYVVEQDEKEDDLRAILNFGHTIGHAIETVENFRLLHGECVSIGIVGVYKIAQYMEVLSEQLVNQVKEILLKLGLPVSLPGLDVERVYNQIFYDKKVKDNKLKFVLPRRIGEVFQCTIKDNELIKKVLLDLSN.

NAD(+) is bound by residues 105–109, 129–130, K142, K151, and 169–172; these read GVVGD, TT, and TIKT. Residues E184, H247, and H263 each contribute to the Zn(2+) site.

This sequence belongs to the sugar phosphate cyclases superfamily. Dehydroquinate synthase family. Co(2+) serves as cofactor. It depends on Zn(2+) as a cofactor. The cofactor is NAD(+).

It is found in the cytoplasm. It catalyses the reaction 7-phospho-2-dehydro-3-deoxy-D-arabino-heptonate = 3-dehydroquinate + phosphate. The protein operates within metabolic intermediate biosynthesis; chorismate biosynthesis; chorismate from D-erythrose 4-phosphate and phosphoenolpyruvate: step 2/7. Functionally, catalyzes the conversion of 3-deoxy-D-arabino-heptulosonate 7-phosphate (DAHP) to dehydroquinate (DHQ). The polypeptide is 3-dehydroquinate synthase (Ruminiclostridium cellulolyticum (strain ATCC 35319 / DSM 5812 / JCM 6584 / H10) (Clostridium cellulolyticum)).